The chain runs to 1257 residues: Elongation factor 2 (1257 aa).

The DOD-type homing endonuclease domain occupies 273–402 (LAGLMFGDGC…LQLLLQKFDV (130 aa)). The 242-residue stretch at 541–782 (VEEHHNFAAE…MVVKHLPDPV (242 aa)) folds into the tr-type G domain. GTP contacts are provided by residues 616–620 (DTPGH) and 670–673 (NKVD). A Diphthamide modification is found at histidine 1120. Residues 1237–1250 (ERKGLKPEPPKPED) are compositionally biased toward basic and acidic residues. Residues 1237–1257 (ERKGLKPEPPKPEDYIEDYGG) are disordered.

It belongs to the TRAFAC class translation factor GTPase superfamily. Classic translation factor GTPase family. EF-G/EF-2 subfamily. Post-translationally, this protein undergoes a protein self splicing that involves a post-translational excision of the intervening region (intein) followed by peptide ligation.

It localises to the cytoplasm. Catalyzes the GTP-dependent ribosomal translocation step during translation elongation. During this step, the ribosome changes from the pre-translocational (PRE) to the post-translocational (POST) state as the newly formed A-site-bound peptidyl-tRNA and P-site-bound deacylated tRNA move to the P and E sites, respectively. Catalyzes the coordinated movement of the two tRNA molecules, the mRNA and conformational changes in the ribosome. The polypeptide is Elongation factor 2 (Methanopyrus kandleri (strain AV19 / DSM 6324 / JCM 9639 / NBRC 100938)).